We begin with the raw amino-acid sequence, 500 residues long: Glycerol-3-phosphate acyltransferase 7 (500 aa).

Helical transmembrane passes span 38-58 (GLIRFATLLFLWPIIALLDVL) and 235-255 (ALIILLWIPFGIILAMIRIFV). Residues 298–303 (HRTLMD) carry the HXXXXD motif motif.

Belongs to the GPAT/DAPAT family. In terms of tissue distribution, weakly or not expressed in roots, leaves, seedlings, developing siliques and flower buds.

The protein localises to the membrane. It carries out the reaction sn-glycerol 3-phosphate + an acyl-CoA = a 1-acyl-sn-glycero-3-phosphate + CoA. It functions in the pathway phospholipid metabolism; CDP-diacylglycerol biosynthesis; CDP-diacylglycerol from sn-glycerol 3-phosphate: step 1/3. Functionally, esterifies acyl-group from acyl-ACP to the sn-1 position of glycerol-3-phosphate, an essential step in glycerolipid biosynthesis. The protein is Glycerol-3-phosphate acyltransferase 7 (GPAT7) of Arabidopsis thaliana (Mouse-ear cress).